A 447-amino-acid chain; its full sequence is UDP-N-acetylmuramoylalanine--D-glutamate ligase (447 aa).

Residue 112–118 (GTNGKST) coordinates ATP.

The protein belongs to the MurCDEF family.

It is found in the cytoplasm. It carries out the reaction UDP-N-acetyl-alpha-D-muramoyl-L-alanine + D-glutamate + ATP = UDP-N-acetyl-alpha-D-muramoyl-L-alanyl-D-glutamate + ADP + phosphate + H(+). It participates in cell wall biogenesis; peptidoglycan biosynthesis. Functionally, cell wall formation. Catalyzes the addition of glutamate to the nucleotide precursor UDP-N-acetylmuramoyl-L-alanine (UMA). The protein is UDP-N-acetylmuramoylalanine--D-glutamate ligase of Legionella pneumophila (strain Lens).